A 322-amino-acid chain; its full sequence is Replication factor C small subunit (322 aa).

50–57 (GPAGTGKT) provides a ligand contact to ATP.

Belongs to the activator 1 small subunits family. RfcS subfamily. In terms of assembly, heteromultimer composed of small subunits (RfcS) and large subunits (RfcL).

Part of the RFC clamp loader complex which loads the PCNA sliding clamp onto DNA. The chain is Replication factor C small subunit from Halobacterium salinarum (strain ATCC 700922 / JCM 11081 / NRC-1) (Halobacterium halobium).